Consider the following 509-residue polypeptide: Maturase K (509 aa).

It belongs to the intron maturase 2 family. MatK subfamily.

The protein localises to the plastid. It is found in the chloroplast. Usually encoded in the trnK tRNA gene intron. Probably assists in splicing its own and other chloroplast group II introns. The sequence is that of Maturase K from Nicotiana paniculata.